A 248-amino-acid polypeptide reads, in one-letter code: Urease accessory protein UreG 1 (248 aa).

Positions 1-14 are enriched in basic and acidic residues; the sequence is MLPEHHDHGHEHGG. Residues 1–36 form a disordered region; that stretch reads MLPEHHDHGHEHGGNGHGHGHRHQVNFDPTAAEPDP. 53-60 contributes to the GTP binding site; sequence GPVGSGKT.

Belongs to the SIMIBI class G3E GTPase family. UreG subfamily. In terms of assembly, homodimer. UreD, UreF and UreG form a complex that acts as a GTP-hydrolysis-dependent molecular chaperone, activating the urease apoprotein by helping to assemble the nickel containing metallocenter of UreC. The UreE protein probably delivers the nickel.

Its subcellular location is the cytoplasm. In terms of biological role, facilitates the functional incorporation of the urease nickel metallocenter. This process requires GTP hydrolysis, probably effectuated by UreG. In Saccharopolyspora erythraea (strain ATCC 11635 / DSM 40517 / JCM 4748 / NBRC 13426 / NCIMB 8594 / NRRL 2338), this protein is Urease accessory protein UreG 1.